A 203-amino-acid polypeptide reads, in one-letter code: MSKYTFTQKNFKVFEVPGLEGRMSAIESEIQPKLAALGTYFTDFLNTHTPDEFYAHIAKHARRTVNPPKDTWVAFSTNKRGYKMLPHFQIGLYEDQVFVMFGVMHEAKNKNHYIEVFEKHFDEIENLPDDYRICTDHVKMEKPLIKDLSTDELKEALHRAHQLKKGEFFIARTLSPKAPELKTDKAFKSYLEDTFDHLLKFYS.

Belongs to the UPF0637 family.

The protein is UPF0637 protein Sca_0732 of Staphylococcus carnosus (strain TM300).